Reading from the N-terminus, the 177-residue chain is ATP-dependent protease subunit HslV (177 aa).

Thr6 is an active-site residue. Na(+)-binding residues include Gly161, Cys164, and Thr167.

It belongs to the peptidase T1B family. HslV subfamily. A double ring-shaped homohexamer of HslV is capped on each side by a ring-shaped HslU homohexamer. The assembly of the HslU/HslV complex is dependent on binding of ATP.

The protein localises to the cytoplasm. It carries out the reaction ATP-dependent cleavage of peptide bonds with broad specificity.. Its activity is regulated as follows. Allosterically activated by HslU binding. Its function is as follows. Protease subunit of a proteasome-like degradation complex believed to be a general protein degrading machinery. This chain is ATP-dependent protease subunit HslV, found in Petrotoga mobilis (strain DSM 10674 / SJ95).